The chain runs to 72 residues: Translation initiation factor IF-1 (72 aa).

An S1-like domain is found at 1-72 (MSKEELLEFP…TKGRITYRFK (72 aa)).

It belongs to the IF-1 family. Component of the 30S ribosomal translation pre-initiation complex which assembles on the 30S ribosome in the order IF-2 and IF-3, IF-1 and N-formylmethionyl-tRNA(fMet); mRNA recruitment can occur at any time during PIC assembly.

Its subcellular location is the cytoplasm. Functionally, one of the essential components for the initiation of protein synthesis. Stabilizes the binding of IF-2 and IF-3 on the 30S subunit to which N-formylmethionyl-tRNA(fMet) subsequently binds. Helps modulate mRNA selection, yielding the 30S pre-initiation complex (PIC). Upon addition of the 50S ribosomal subunit IF-1, IF-2 and IF-3 are released leaving the mature 70S translation initiation complex. In Parvibaculum lavamentivorans (strain DS-1 / DSM 13023 / NCIMB 13966), this protein is Translation initiation factor IF-1.